The following is a 100-amino-acid chain: Apolipoprotein C-II (100 aa).

An N-terminal signal peptide occupies residues 1-22 (MGTRFLLALFLVLLVLGFEVQG). Residues 66 to 74 (TVDEKLRDM) are lipid binding. The tract at residues 78–100 (STAAVSTYAGIFTDQLLTLLKGD) is lipoprotein lipase cofactor.

This sequence belongs to the apolipoprotein C2 family. Proapolipoprotein C-II is synthesized as a sialic acid containing glycoprotein which is subsequently desialylated prior to its proteolytic processing. Post-translationally, proapolipoprotein C-II, the major form found in plasma undergoes proteolytic cleavage of its N-terminal hexapeptide to generate apolipoprotein C-II, which occurs as the minor form in plasma.

It localises to the secreted. Component of chylomicrons, very low-density lipoproteins (VLDL), low-density lipoproteins (LDL), and high-density lipoproteins (HDL) in plasma. Plays an important role in lipoprotein metabolism as an activator of lipoprotein lipase. Both proapolipoprotein C-II and apolipoprotein C-II can activate lipoprotein lipase. The sequence is that of Apolipoprotein C-II (APOC2) from Otolemur garnettii (Small-eared galago).